The sequence spans 238 residues: Probable transcriptional regulatory protein YeeN (238 aa).

This sequence belongs to the TACO1 family. YeeN subfamily.

Its subcellular location is the cytoplasm. This is Probable transcriptional regulatory protein YeeN from Salmonella typhi.